A 163-amino-acid chain; its full sequence is Nucleotide-binding protein CKO_02735 (163 aa).

The protein belongs to the YajQ family.

Its function is as follows. Nucleotide-binding protein. The polypeptide is Nucleotide-binding protein CKO_02735 (Citrobacter koseri (strain ATCC BAA-895 / CDC 4225-83 / SGSC4696)).